Here is a 305-residue protein sequence, read N- to C-terminus: MIRVLFMGTPAYAKTILEALWFSEEVEVVGVVSQPDKPVGRRQELTPPPVKESCLRLAPHTPLFQPENLKEERWAKEWRALEPDFIVVAAYGKILPKVILDIAPCINLHASILPLYRGASPIHESLRRGDAWSGVSAMRMEEGLDCGEVLGCSFVEIKEEWGVSRLFEELANRAAALTLKVLKRFSEIRPLPQVGADSSYCRKIRKEEGLVGFVNAKELYDQFRAYKVWPGIFLRSELKLKEITLLSETGEHHMGEILAINKEGVVVGCKEGSLRILMVQAPSKKEVDAVSYVNGKRLGVGDILF.

111–114 (SILP) is a binding site for (6S)-5,6,7,8-tetrahydrofolate.

This sequence belongs to the Fmt family.

The enzyme catalyses L-methionyl-tRNA(fMet) + (6R)-10-formyltetrahydrofolate = N-formyl-L-methionyl-tRNA(fMet) + (6S)-5,6,7,8-tetrahydrofolate + H(+). Functionally, attaches a formyl group to the free amino group of methionyl-tRNA(fMet). The formyl group appears to play a dual role in the initiator identity of N-formylmethionyl-tRNA by promoting its recognition by IF2 and preventing the misappropriation of this tRNA by the elongation apparatus. The protein is Methionyl-tRNA formyltransferase of Wolinella succinogenes (strain ATCC 29543 / DSM 1740 / CCUG 13145 / JCM 31913 / LMG 7466 / NCTC 11488 / FDC 602W) (Vibrio succinogenes).